A 426-amino-acid chain; its full sequence is Arrestin domain-containing protein 17 (426 aa).

Residues 320-329 are compositionally biased toward polar residues; it reads QSAGNGSLPK. A disordered region spans residues 320–340; it reads QSAGNGSLPKSSIKDSPPKWD. The span at 331 to 340 shows a compositional bias: basic and acidic residues; it reads SIKDSPPKWD.

It belongs to the arrestin family. In terms of assembly, interacts with tax-6. Post-translationally, phosphorylated. Dephosphorylated by tax-6 in vitro. As to expression, expressed from the comma stage to adulthood in the nervous system, including sensory neurons and interneurons posterior to the nerve ring, dorsal and ventral nerve cords, tail ganglia and, CEP, HSN, ASK, ADL, ASH and ASJ neurons.

Its function is as follows. Involved in several behavioral responses including chemotaxis towards lysine and adaptation to repeated osmotic stress. In addition, plays a role in resuming egg-laying and locomotion after starvation. The polypeptide is Arrestin domain-containing protein 17 (Caenorhabditis elegans).